The chain runs to 167 residues: CGG triplet repeat-binding protein 1 (167 aa).

Ser56 is modified (phosphoserine). The Nuclear localization signal motif lies at 80–84; it reads RKKQR. The residue at position 164 (Ser164) is a Phosphoserine.

Ubiquitous. Highly expressed in placenta, thymus, lymph nodes, cerebellum and cerebral cortex. Low expression in other regions of the brain.

It localises to the nucleus. In terms of biological role, binds to nonmethylated 5'-d(CGG)(n)-3' trinucleotide repeats in the FMR1 promoter. May play a role in regulating FMR1 promoter. This is CGG triplet repeat-binding protein 1 (CGGBP1) from Homo sapiens (Human).